The following is a 234-amino-acid chain: Probable transcriptional regulatory protein PSPTO_3162 (234 aa).

Belongs to the TACO1 family.

It is found in the cytoplasm. The protein is Probable transcriptional regulatory protein PSPTO_3162 of Pseudomonas syringae pv. tomato (strain ATCC BAA-871 / DC3000).